A 276-amino-acid chain; its full sequence is NH(3)-dependent NAD(+) synthetase (276 aa).

43-50 is an ATP binding site; the sequence is GISGGVDS. Asp49 is a binding site for Mg(2+). Arg146 contacts deamido-NAD(+). Residue Thr166 coordinates ATP. Glu171 is a Mg(2+) binding site. The deamido-NAD(+) site is built by Lys179 and Asp186. 2 residues coordinate ATP: Lys195 and Thr217. 266 to 267 provides a ligand contact to deamido-NAD(+); it reads HK.

Belongs to the NAD synthetase family. As to quaternary structure, homodimer.

The enzyme catalyses deamido-NAD(+) + NH4(+) + ATP = AMP + diphosphate + NAD(+) + H(+). It participates in cofactor biosynthesis; NAD(+) biosynthesis; NAD(+) from deamido-NAD(+) (ammonia route): step 1/1. In terms of biological role, catalyzes the ATP-dependent amidation of deamido-NAD to form NAD. Uses ammonia as a nitrogen source. In Shewanella baltica (strain OS185), this protein is NH(3)-dependent NAD(+) synthetase.